Here is a 283-residue protein sequence, read N- to C-terminus: Phosphate import ATP-binding protein PstB (283 aa).

Polar residues predominate over residues 1–20 (MAQTLAQTKQISQSHTFDVS). The interval 1-33 (MAQTLAQTKQISQSHTFDVSQSHHKTPNDTNSH) is disordered. An ABC transporter domain is found at 37–278 (YSTQNLDLWY…PSNKKTEDYI (242 aa)). 69–76 (GPSGCGKS) serves as a coordination point for ATP.

The protein belongs to the ABC transporter superfamily. Phosphate importer (TC 3.A.1.7) family. The complex is composed of two ATP-binding proteins (PstB), two transmembrane proteins (PstC and PstA) and a solute-binding protein (PstS).

It localises to the cell membrane. It catalyses the reaction phosphate(out) + ATP + H2O = ADP + 2 phosphate(in) + H(+). Part of the ABC transporter complex PstSACB involved in phosphate import. Responsible for energy coupling to the transport system. The polypeptide is Phosphate import ATP-binding protein PstB (Staphylococcus aureus (strain bovine RF122 / ET3-1)).